A 181-amino-acid polypeptide reads, in one-letter code: TATA-box-binding protein C (181 aa).

Tandem repeats lie at residues 5–83 (IANI…LGML) and 99–177 (VENV…QSKV).

Belongs to the TBP family.

In terms of biological role, general factor that plays a role in the activation of archaeal genes transcribed by RNA polymerase. Binds specifically to the TATA box promoter element which lies close to the position of transcription initiation. The chain is TATA-box-binding protein C (tbpC1) from Halobacterium salinarum (strain ATCC 700922 / JCM 11081 / NRC-1) (Halobacterium halobium).